The chain runs to 1254 residues: Receptor tyrosine-protein kinase erbB-2 (1254 aa).

Positions 1 to 22 are cleaved as a signal peptide; it reads MELAAWCGWGLLLALLSPGASG. Residues 23–652 are Extracellular-facing; the sequence is TQVCTGTDMK…PAEQRASPAT (630 aa). C26 and C53 are oxidised to a cystine. N-linked (GlcNAc...) asparagine glycans are attached at residues N68, N125, and N187. 14 disulfide bridges follow: C162-C192, C195-C204, C199-C212, C236-C244, C240-C252, C255-C264, C268-C295, C299-C311, C315-C331, C334-C338, C342-C367, C475-C504, C511-C520, and C515-C528. N-linked (GlcNAc...) asparagine glycosylation is present at N259. N530 carries N-linked (GlcNAc...) asparagine glycosylation. 8 disulfide bridges follow: C531–C540, C544–C560, C563–C576, C567–C584, C587–C596, C600–C623, C626–C634, and C630–C642. A glycan (N-linked (GlcNAc...) asparagine) is linked at N571. N629 carries an N-linked (GlcNAc...) asparagine glycan. A helical membrane pass occupies residues 653–675; it reads SIIATVVGILLFLVIGVVVGILI. The required for interaction with KPNB1 and EEA1 stretch occupies residues 676-689; that stretch reads KRRRQKIRKYTMRR. The Nuclear localization signal signature appears at 676-689; it reads KRRRQKIRKYTMRR. Over 676–1254 the chain is Cytoplasmic; that stretch reads KRRRQKIRKY…PEYLGLDVPV (579 aa). Residues 720–987 form the Protein kinase domain; sequence LRKVKVLGSG…RMARDPQRFV (268 aa). ATP contacts are provided by residues 726 to 734 and K753; that span reads LGSGAFGTV. Catalysis depends on D845, which acts as the Proton acceptor. Residue Y877 is modified to Phosphotyrosine. Disordered regions lie at residues 1029–1116 and 1133–1179; these read GFFF…SEDP and CSPQ…GKNG. Phosphoserine is present on residues S1054, S1078, S1083, and S1107. Y1112 is subject to Phosphotyrosine. Position 1139 is a phosphotyrosine; by autocatalysis (Y1139). The span at 1146–1161 shows a compositional bias: pro residues; the sequence is RPQPPLTPEGPLPPVR. Position 1166 is a phosphothreonine (T1166). The interval 1195–1197 is interaction with PIK3C2B; it reads EYL. Residue Y1196 is modified to Phosphotyrosine. A disordered region spans residues 1223–1254; sequence DQDPSERGSPPNTFEGTPTAENPEYLGLDVPV. Polar residues predominate over residues 1232–1242; sequence PPNTFEGTPTA. Y1247 is modified (phosphotyrosine; by autocatalysis).

Belongs to the protein kinase superfamily. Tyr protein kinase family. EGF receptor subfamily. As to quaternary structure, homodimer. Heterodimer with EGFR, ERBB3 and ERBB4. Part of a complex with EGFR and either PIK3C2A or PIK3C2B. May interact with PIK3C2B when phosphorylated on Tyr-1196. Interacts with PRKCABP and PLXNB1. Interacts (when phosphorylated on Tyr-1247) with MEMO. Interacts with MUC1. Interacts (when phosphorylated on Tyr-1139) with GRB7 (via SH2 domain). Interacts (when phosphorylated on Tyr-1247) with ERBIN. Interacts with SRC, KPNB1, RANBP2, EEA1, CRM1, CLTC, PTK6, RPA194, MYOC and ACTB. Interacts (preferentially with the tyrosine phosphorylated form) with CPNE3; this interaction occurs at the cell membrane and is increased in a growth factor heregulin-dependent manner. Interacts with HSP90AA1 and HSP90AB1 in an ATP-dependent manner; the interaction suppresses ERBB2 kinase activity. Interacts with SORL1; this interaction regulates ERBB2 subcellular distribution by promoting its recycling after internalization from endosomes back to the plasma membrane, hence stimulates ERBB2-mediated signaling. Interacts with SH3BGRL. Interacts with ROR1. In terms of processing, autophosphorylated. Autophosphorylation occurs in trans, i.e. one subunit of the dimeric receptor phosphorylates tyrosine residues on the other subunit. Ligand-binding increases phosphorylation on tyrosine residues. Signaling via SEMA4C promotes phosphorylation at Tyr-1247. Dephosphorylated by PTPN12.

The protein resides in the cell membrane. It is found in the cell projection. It localises to the ruffle membrane. The protein localises to the early endosome. Its subcellular location is the cytoplasm. The protein resides in the perinuclear region. It is found in the nucleus. It catalyses the reaction L-tyrosyl-[protein] + ATP = O-phospho-L-tyrosyl-[protein] + ADP + H(+). In terms of biological role, protein tyrosine kinase that is part of several cell surface receptor complexes, but that apparently needs a coreceptor for ligand binding. Essential component of a neuregulin-receptor complex, although neuregulins do not interact with it alone. GP30 is a potential ligand for this receptor. Regulates outgrowth and stabilization of peripheral microtubules (MTs). Upon ERBB2 activation, the MEMO1-RHOA-DIAPH1 signaling pathway elicits the phosphorylation and thus the inhibition of GSK3B at cell membrane. This prevents the phosphorylation of APC and CLASP2, allowing its association with the cell membrane. In turn, membrane-bound APC allows the localization of MACF1 to the cell membrane, which is required for microtubule capture and stabilization. In the nucleus is involved in transcriptional regulation. Associates with the 5'-TCAAATTC-3' sequence in the PTGS2/COX-2 promoter and activates its transcription. Implicated in transcriptional activation of CDKN1A; the function involves STAT3 and SRC. Involved in the transcription of rRNA genes by RNA Pol I and enhances protein synthesis and cell growth. The chain is Receptor tyrosine-protein kinase erbB-2 (ERBB2) from Mesocricetus auratus (Golden hamster).